The chain runs to 232 residues: Phosphoglycolate phosphatase (232 aa).

D8 serves as the catalytic Nucleophile. D8 and D10 together coordinate Mg(2+). Substrate is bound at residue K155. 2 residues coordinate Mg(2+): D178 and D182.

It belongs to the archaeal SPP-like hydrolase family. The cofactor is Mg(2+).

The enzyme catalyses 2-phosphoglycolate + H2O = glycolate + phosphate. Functionally, catalyzes the dephosphorylation of 2-phosphoglycolate. The protein is Phosphoglycolate phosphatase of Methanospirillum hungatei JF-1 (strain ATCC 27890 / DSM 864 / NBRC 100397 / JF-1).